The following is a 105-amino-acid chain: uncharacterized protein (105 aa).

Low complexity predominate over residues 31–47 (SVNLPSPSVKPSVTPSV). Residues 31-80 (SVNLPSPSVKPSVTPSVKKPPHVIRSDYSKPREKPAKVAKKPTVKNDKKP) form a disordered region. Basic and acidic residues predominate over residues 54–66 (IRSDYSKPREKPA).

This is an uncharacterized protein from Caenorhabditis elegans.